The primary structure comprises 254 residues: Small ribosomal subunit protein uS2 (254 aa).

Belongs to the universal ribosomal protein uS2 family.

The chain is Small ribosomal subunit protein uS2 from Legionella pneumophila (strain Corby).